Here is a 101-residue protein sequence, read N- to C-terminus: Movement protein (101 aa).

The segment at 1–22 (MDPQNSFLLQPRVPTAAPTSGG) is disordered. Residues 30 to 50 (EVAILSFVGLICFYLLYLWVL) form a helical membrane-spanning segment. A disordered region spans residues 79 to 101 (NPIPNTQAPPSQGNPGPFVPGTG). Polar residues predominate over residues 80–92 (PIPNTQAPPSQGN).

It belongs to the mastrevirus movement protein family. In terms of assembly, interacts with the capsid protein (CP). Part of a MP-CP-viral DNA complex.

The protein resides in the host membrane. Functionally, involved in the viral transport within, and between cells. The sequence is that of Movement protein from Avena sativa (Oat).